Consider the following 212-residue polypeptide: Orotate phosphoribosyltransferase (212 aa).

Residues arginine 97, lysine 101, histidine 103, and 123–131 (EDLISTGGS) contribute to the 5-phospho-alpha-D-ribose 1-diphosphate site. Residue serine 127 participates in orotate binding.

It belongs to the purine/pyrimidine phosphoribosyltransferase family. PyrE subfamily. As to quaternary structure, homodimer. Requires Mg(2+) as cofactor.

It carries out the reaction orotidine 5'-phosphate + diphosphate = orotate + 5-phospho-alpha-D-ribose 1-diphosphate. It functions in the pathway pyrimidine metabolism; UMP biosynthesis via de novo pathway; UMP from orotate: step 1/2. Functionally, catalyzes the transfer of a ribosyl phosphate group from 5-phosphoribose 1-diphosphate to orotate, leading to the formation of orotidine monophosphate (OMP). This is Orotate phosphoribosyltransferase from Bacteroides fragilis (strain ATCC 25285 / DSM 2151 / CCUG 4856 / JCM 11019 / LMG 10263 / NCTC 9343 / Onslow / VPI 2553 / EN-2).